The following is a 462-amino-acid chain: RuvB-like 2 (462 aa).

Position 76–83 (76–83) interacts with ATP; it reads GQPGTGKT.

It belongs to the RuvB family. As to quaternary structure, forms homohexameric rings. Can form a dodecamer with ruvbl2 made of two stacked hexameric rings. Is a component of the RNA polymerase II holoenzyme complex. Component of the chromatin-remodeling Ino80 complex. Component of some MLL1/MLL complex.

It is found in the nucleus. Its subcellular location is the dynein axonemal particle. It carries out the reaction ATP + H2O = ADP + phosphate + H(+). Functionally, has single-stranded DNA-stimulated ATPase and ATP-dependent DNA helicase (5' to 3') activity suggesting a role in nuclear processes such as recombination and transcription. Proposed core component of the chromatin remodeling INO80 complex which exhibits DNA- and nucleosome-activated ATPase activity and catalyzes ATP-dependent nucleosome sliding. Involved in the endoplasmic reticulum (ER)-associated degradation (ERAD) pathway where it negatively regulates expression of ER stress response genes. The protein is RuvB-like 2 (ruvbl2) of Xenopus laevis (African clawed frog).